The following is a 532-amino-acid chain: MVDDKEKNMKCLTFFLMLPETVKNRSKKSSKKTNTGGGGGGSSSSSSSSSNSKLPPVCYEIITLKTKKKKKMAADIFPRKKPANSSSTTVQQYHQQNLSNNNLIPAPNWQGLYPTIRERNAVMFNNDLMADVHFVVGPPGGTQRLPGHKYVLAVGSSVFHAMFYGELAEDKDEIRIPDVEPAAFLAMLKYIYCDEIDLAADTVLATLYAAKKYIVPHLARACVNFLETSLSAKNACVLLSQSCLFEEPDLTQRCWEVIDAQAELALKSEGFCDIDFQTLESILRRETLNAKEIVVFEAALNWAEVECQRQDLALSIENKRKVLGKALYLIRIPTMALDDFANGAAQSGVLTLNETNDIFLWYTAAKKPELQFVSKARKGLVPQRCHRFQSCAYRSNQWRYRGRCDSIQFAVDKRVFIAGFGLYGSSCGSAEYSAKIELKRQGVVLGQNLSKYFSDGSSNTFPVWFEYPVQIEPDTFYTASVILDGNELSYFGQEGMTEVQCGKVTVQFQCSSDSTNGTGVQGGQIPELIFYA.

The segment at lysine 23–leucine 54 is disordered. A compositionally biased stretch (low complexity) spans serine 43–lysine 53. The region spanning alanine 130–alanine 200 is the BTB domain. The BACK domain occupies phenylalanine 245 to glutamine 310.

Expressed in visual cortex. Expressed in visual cortex layer IV neurons.

The protein resides in the cytoplasm. Its subcellular location is the cytosol. It is found in the nucleus. Its function is as follows. Acts as a key regulator of dendritic field orientation during development of sensory cortex. Also directs dendrites toward active axon terminals when ectopically expressed. The polypeptide is BTB/POZ domain-containing protein 3 (BTBD3) (Mustela putorius furo (European domestic ferret)).